Reading from the N-terminus, the 187-residue chain is 2-oxoglutarate synthase subunit KorC (187 aa).

Heterotetramer of the KorA, KorB, KorC and KorD subunits.

It catalyses the reaction 2 oxidized [2Fe-2S]-[ferredoxin] + 2-oxoglutarate + CoA = succinyl-CoA + 2 reduced [2Fe-2S]-[ferredoxin] + CO2 + H(+). The polypeptide is 2-oxoglutarate synthase subunit KorC (korC) (Archaeoglobus fulgidus (strain ATCC 49558 / DSM 4304 / JCM 9628 / NBRC 100126 / VC-16)).